An 842-amino-acid polypeptide reads, in one-letter code: MAAPILKDVVAYVEVWSSNGTENYSKTFTTQLVDMGAKVSKTFNKQVTHVIFKDGYQSTWDKARKRGVKLVSVLWVEKCRTAGAHIDESLFPAANTNEHLPSLIKKKRKCMQPKDFNFKTPENDKRFQKKFEKMAKELQRQKTSLDDDVPILLFESNGSLTYSPTIKINSSHHSAMEKRLQEMKEKRENLSPTSSQMIQQSHDNPSNSLCEAPLNISHDTLCSDESIAGGLHSSFDDLCGNSECGNQERKLGGSINDTKSDMCISSLVLKTNNTHLSPSFAHLDKSSPQKFLSNLSKEEINLQRNIVGKIVTPDQKQAAGMSQETFEEKYRLSPTLSSTKGHLLIHSRPRSSSVKRKRVSYGFHSPPKEKCKRKRSIRRSIMPRLQLCRSEGSLQCMAGPALEALGCGESSYDDYFSPDNLKERNSENLPPKSQLPSNPAQFSCRSLSKKERTSIFEMSDFSCVGKKPRTVDITSFTAKTICSPQKTASGEGCATFSCVTSEESSAPEETLRYCRQAGPQQKEDAWPEGNGFSYTIEDPSLPKGHDGDLTPFEGILEEVKEAVGLKSTQDKGTTSKISNSSEGEAPSEHEPRSVVDCNVERSAEEKENLPGGYSGSVKNRPTRRDVLDGSCDSFKDLIKPHEELKKSGKGKKPTRTLVMTSMPSEKQNVVIQVVDKLKGFSIARDVCETTTHVLSGKPLRTLNVLLGIARGCWVLSYDWVLWSLESGQWISEEPFELSNHFPAAPLCRRECHLSAGPYRGTLFADQPVMFVSPASSPPVAKLCELVHLCGGRVSQVPRQASIVIGPYSGKKKATVKYLSEKWVLDSITQHKVCASENYLLPQ.

Residues 1 to 93 enclose the BRCT 1 domain; the sequence is MAAPILKDVV…AHIDESLFPA (93 aa). Phosphoserine occurs at positions 279, 287, 296, and 333. Position 335 is a phosphothreonine (T335). Residues 346-359 are compositionally biased toward basic residues; the sequence is HSRPRSSSVKRKRV. Disordered stretches follow at residues 346 to 375, 418 to 443, and 563 to 624; these read HSRP…KRKR, PDNL…AQFS, and VGLK…PTRR. 2 stretches are compositionally biased toward polar residues: residues 434–443 and 566–582; these read QLPSNPAQFS and KSTQ…NSSE. The span at 586–608 shows a compositional bias: basic and acidic residues; it reads PSEHEPRSVVDCNVERSAEEKEN. 2 BRCT domains span residues 647–737 and 758–840; these read SGKG…PFEL and YRGT…NYLL.

In terms of assembly, interacts with CDC27 and maybe other components of the APC/C complex. Interacts with histone variant H2AX under DNA damage conditions.

Its subcellular location is the cytoplasm. The protein localises to the cytoskeleton. It is found in the microtubule organizing center. It localises to the centrosome. Implicated in chromosome condensation and DNA damage induced cellular responses. May play a role in neurogenesis and regulation of the size of the cerebral cortex. The protein is Microcephalin of Macaca fascicularis (Crab-eating macaque).